A 184-amino-acid polypeptide reads, in one-letter code: Peptide deformylase (184 aa).

Positions 96 and 138 each coordinate Fe cation. Glu139 is an active-site residue. His142 serves as a coordination point for Fe cation.

It belongs to the polypeptide deformylase family. Fe(2+) is required as a cofactor.

The catalysed reaction is N-terminal N-formyl-L-methionyl-[peptide] + H2O = N-terminal L-methionyl-[peptide] + formate. Its function is as follows. Removes the formyl group from the N-terminal Met of newly synthesized proteins. Requires at least a dipeptide for an efficient rate of reaction. N-terminal L-methionine is a prerequisite for activity but the enzyme has broad specificity at other positions. This Cytophaga hutchinsonii (strain ATCC 33406 / DSM 1761 / CIP 103989 / NBRC 15051 / NCIMB 9469 / D465) protein is Peptide deformylase.